Consider the following 1244-residue polypeptide: ATP-dependent helicase/nuclease subunit A (1244 aa).

Residues 4-475 (KKWTAEQLAA…IGLSKNFRSR (472 aa)) enclose the UvrD-like helicase ATP-binding domain. Residue 25–32 (AAAGAGKT) coordinates ATP. The 302-residue stretch at 515–816 (EDVKTATGPV…RIMSIHKSKG (302 aa)) folds into the UvrD-like helicase C-terminal domain. The disordered stretch occupies residues 538–559 (EQNTDSAEEKLTDGEEQEDLDS).

Belongs to the helicase family. AddA subfamily. As to quaternary structure, heterodimer of AddA and AddB/RexB. Mg(2+) serves as cofactor.

It catalyses the reaction Couples ATP hydrolysis with the unwinding of duplex DNA by translocating in the 3'-5' direction.. The catalysed reaction is ATP + H2O = ADP + phosphate + H(+). Its function is as follows. The heterodimer acts as both an ATP-dependent DNA helicase and an ATP-dependent, dual-direction single-stranded exonuclease. Recognizes the chi site generating a DNA molecule suitable for the initiation of homologous recombination. The AddA nuclease domain is required for chi fragment generation; this subunit has the helicase and 3' -&gt; 5' nuclease activities. The polypeptide is ATP-dependent helicase/nuclease subunit A (Desulforamulus reducens (strain ATCC BAA-1160 / DSM 100696 / MI-1) (Desulfotomaculum reducens)).